A 275-amino-acid chain; its full sequence is Diaminopimelate epimerase (275 aa).

Substrate-binding residues include Asn12, Gln45, and Asn65. The active-site Proton donor is Cys74. Residues 75 to 76 (GN), Asn158, Asn191, and 209 to 210 (ER) contribute to the substrate site. Catalysis depends on Cys218, which acts as the Proton acceptor. Residue 219-220 (GT) coordinates substrate.

It belongs to the diaminopimelate epimerase family. As to quaternary structure, homodimer.

It localises to the cytoplasm. It carries out the reaction (2S,6S)-2,6-diaminopimelate = meso-2,6-diaminopimelate. The protein operates within amino-acid biosynthesis; L-lysine biosynthesis via DAP pathway; DL-2,6-diaminopimelate from LL-2,6-diaminopimelate: step 1/1. Its function is as follows. Catalyzes the stereoinversion of LL-2,6-diaminopimelate (L,L-DAP) to meso-diaminopimelate (meso-DAP), a precursor of L-lysine and an essential component of the bacterial peptidoglycan. In Shewanella baltica (strain OS223), this protein is Diaminopimelate epimerase.